Reading from the N-terminus, the 39-residue chain is Photosystem II reaction center protein L (39 aa).

The helical transmembrane segment at 18 to 38 (ILYWGLLLIFVLAVLFSNYFF) threads the bilayer.

Belongs to the PsbL family. PSII is composed of 1 copy each of membrane proteins PsbA, PsbB, PsbC, PsbD, PsbE, PsbF, PsbH, PsbI, PsbJ, PsbK, PsbL, PsbM, PsbT, PsbX, PsbY, PsbZ, Psb30/Ycf12, at least 3 peripheral proteins of the oxygen-evolving complex and a large number of cofactors. It forms dimeric complexes.

It is found in the plastid membrane. In terms of biological role, one of the components of the core complex of photosystem II (PSII). PSII is a light-driven water:plastoquinone oxidoreductase that uses light energy to abstract electrons from H(2)O, generating O(2) and a proton gradient subsequently used for ATP formation. It consists of a core antenna complex that captures photons, and an electron transfer chain that converts photonic excitation into a charge separation. This subunit is found at the monomer-monomer interface and is required for correct PSII assembly and/or dimerization. The sequence is that of Photosystem II reaction center protein L from Cuscuta pentagona (Five-angled dodder).